Reading from the N-terminus, the 323-residue chain is tRNA U34 carboxymethyltransferase (323 aa).

Carboxy-S-adenosyl-L-methionine contacts are provided by residues Lys-91, Trp-105, Lys-110, Gly-130, 152–154 (DPT), 181–182 (IE), Met-196, Tyr-200, and Arg-315.

The protein belongs to the class I-like SAM-binding methyltransferase superfamily. CmoB family. As to quaternary structure, homotetramer.

The catalysed reaction is carboxy-S-adenosyl-L-methionine + 5-hydroxyuridine(34) in tRNA = 5-carboxymethoxyuridine(34) in tRNA + S-adenosyl-L-homocysteine + H(+). Its function is as follows. Catalyzes carboxymethyl transfer from carboxy-S-adenosyl-L-methionine (Cx-SAM) to 5-hydroxyuridine (ho5U) to form 5-carboxymethoxyuridine (cmo5U) at position 34 in tRNAs. In Salmonella typhimurium (strain LT2 / SGSC1412 / ATCC 700720), this protein is tRNA U34 carboxymethyltransferase.